Reading from the N-terminus, the 329-residue chain is NADH-quinone oxidoreductase subunit H 1 (329 aa).

A run of 8 helical transmembrane segments spans residues 12 to 32 (LAKI…LVFA), 78 to 98 (WLFY…FAVI), 120 to 140 (VGLL…ALGG), 159 to 179 (LISY…LAGS), 191 to 211 (GIWF…SIAA), 242 to 262 (LFFV…TTFF), 270 to 290 (WLPP…FFIW), and 308 to 328 (WKVL…ILML).

It belongs to the complex I subunit 1 family. In terms of assembly, NDH-1 is composed of 14 different subunits. Subunits NuoA, H, J, K, L, M, N constitute the membrane sector of the complex.

It localises to the cell inner membrane. The enzyme catalyses a quinone + NADH + 5 H(+)(in) = a quinol + NAD(+) + 4 H(+)(out). Functionally, NDH-1 shuttles electrons from NADH, via FMN and iron-sulfur (Fe-S) centers, to quinones in the respiratory chain. The immediate electron acceptor for the enzyme in this species is believed to be ubiquinone. Couples the redox reaction to proton translocation (for every two electrons transferred, four hydrogen ions are translocated across the cytoplasmic membrane), and thus conserves the redox energy in a proton gradient. This subunit may bind ubiquinone. The sequence is that of NADH-quinone oxidoreductase subunit H 1 from Geobacter metallireducens (strain ATCC 53774 / DSM 7210 / GS-15).